A 1253-amino-acid polypeptide reads, in one-letter code: MPGPRGAAHGLAPAMRQAGALGLLALLLLALLGPGGGAEGGPAGERGTGGGGALARERFKVVFAPVICKRTCLKGQCRDSCQQGSNMTLIGENGHSTDTLTGSGFRVVVCPLPCMNGGQCSSRNQCLCPPDFTGRFCQVPAAGTGAGTGSSGPGLARTGAMSTGPLPPLAPEGESVASKHAIYAVQVIADPPGPGEGPPAQHAAFLVPLGPGQISAEVQAPPPVVNVRVHHPPEASVQVHRIEGPNAEGPASSQHLLPHPKPQHPRPPTQKPLGRCFQDTLPKQPCGSNPLPGLTKQEDCCGSIGTAWGQSKCHKCPQLQYTGVQKPGPVRGEVGADCPQGYKRLNSTHCQDINECAMPGMCRHGDCLNNPGSYRCVCPPGHSLGPSRTQCIADKPEEKSLCFRLVSTEHQCQHPLTTRLTRQLCCCSVGKAWGARCQRCPADGTAAFKEICPAGKGYHILTSHQTLTIQGESDFSLFLHPDGPPKPQQLPESPSRAPPLEDTEEERGVTMDPPVSEERSVQQSHPTTTTSPPRPYPELISRPSPPTFHRFLPDLPPSRSAVEIAPTQVTETDECRLNQNICGHGQCVPGPSDYSCHCNAGYRSHPQHRYCVDVNECEAEPCGPGKGICMNTGGSYNCHCNRGYRLHVGAGGRSCVDLNECTKPHLCGDGGFCINFPGHYKCNCYPGYRLKASRPPICEDIDECRDPSTCPDGKCENKPGSFKCIACQPGYRSQGGGACRDVNECSEGTPCSPGWCENLPGSYRCTCAQGYEPAQDGLSCIDVDECEAGKVCQDGICTNTPGSFQCQCLSGYHLSRDRSRCEDIDECDFPAACIGGDCINTNGSYRCLCPQGHRLVGGRKCQDIDECSQDPGLCLPHGACENLQGSYVCVCDEGFTLTQDQHGCEEVEQPHHKKECYLNFDDTVFCDSVLATNVTQQECCCSLGAGWGDHCEIYPCPVYSSAEFHSLCPDGKGYTQDNNIVNYGIPAHRDIDECILFGAEICKEGKCVNTQPGYECYCKQGFYYDGNLLECVDVDECLDESNCRNGVCENTRGGYRCACTPPAEYSPAQRQCLSPEEMEHAPERREVCWGQRGEDGMCMGPLAGPALTFDDCCCRQGRGWGTQCRPCPPRGTGSQCPTSQSESNSFWDTSPLLLGKSPRDEDSSEEDSDECRCVSGRCVPRPGGAVCECPGGFQLDASRARCVDIDECRELNQRGLLCKSERCVNTSGSFRCVCKAGFTRSRPHGACVPQRRR.

Residues 1–38 (MPGPRGAAHGLAPAMRQAGALGLLALLLLALLGPGGGA) form the signal peptide. A glycan (N-linked (GlcNAc...) asparagine) is linked at Asn86. The EGF-like 1 domain maps to 106–138 (RVVVCPLPCMNGGQCSSRNQCLCPPDFTGRFCQ). Cystine bridges form between Cys110–Cys120, Cys114–Cys126, and Cys128–Cys137. A disordered region spans residues 244 to 270 (GPNAEGPASSQHLLPHPKPQHPRPPTQ). One can recognise a TB 1 domain in the interval 274–328 (GRCFQDTLPKQPCGSNPLPGLTKQEDCCGSIGTAWGQSKCHKCPQLQYTGVQKPG). Intrachain disulfides connect Cys276–Cys300, Cys286–Cys313, and Cys301–Cys316. Asn346 carries N-linked (GlcNAc...) asparagine glycosylation. Positions 352-392 (DINECAMPGMCRHGDCLNNPGSYRCVCPPGHSLGPSRTQCI) constitute an EGF-like 2; calcium-binding domain. 7 cysteine pairs are disulfide-bonded: Cys356-Cys367, Cys362-Cys376, Cys378-Cys391, Cys402-Cys425, Cys412-Cys437, Cys426-Cys440, and Cys427-Cys452. Residues 400-452 (SLCFRLVSTEHQCQHPLTTRLTRQLCCCSVGKAWGARCQRCPADGTAAFKEIC) enclose the TB 2 domain. Residues 475-555 (FSLFLHPDGP…PTFHRFLPDL (81 aa)) form a disordered region. Residues 571-612 (ETDECRLNQNICGHGQCVPGPSDYSCHCNAGYRSHPQHRYCV) enclose the EGF-like 3 domain. Disulfide bonds link Cys575/Cys587, Cys582/Cys596, Cys598/Cys611, Cys617/Cys629, Cys622/Cys638, Cys661/Cys673, Cys667/Cys682, Cys684/Cys698, Cys745/Cys756, Cys751/Cys765, Cys767/Cys780, Cys786/Cys797, Cys792/Cys806, Cys808/Cys821, Cys827/Cys838, Cys833/Cys847, Cys849/Cys861, Cys867/Cys880, Cys874/Cys889, Cys891/Cys904, Cys916/Cys939, Cys926/Cys951, Cys940/Cys956, Cys941/Cys968, Cys994/Cys1007, Cys1002/Cys1016, Cys1018/Cys1031, Cys1037/Cys1048, Cys1043/Cys1057, Cys1059/Cys1072, Cys1113/Cys1127, and Cys1114/Cys1136. One can recognise an EGF-like 4; calcium-binding domain in the interval 613–656 (DVNECEAEPCGPGKGICMNTGGSYNCHCNRGYRLHVGAGGRSCV). One can recognise an EGF-like 5; calcium-binding domain in the interval 657 to 699 (DLNECTKPHLCGDGGFCINFPGHYKCNCYPGYRLKASRPPICE). The region spanning 741 to 781 (DVNECSEGTPCSPGWCENLPGSYRCTCAQGYEPAQDGLSCI) is the EGF-like 6; calcium-binding domain. An EGF-like 7; calcium-binding domain is found at 782–822 (DVDECEAGKVCQDGICTNTPGSFQCQCLSGYHLSRDRSRCE). The EGF-like 8; calcium-binding domain maps to 823 to 861 (DIDECDFPAACIGGDCINTNGSYRCLCPQGHRLVGGRKC). Asn842 carries an N-linked (GlcNAc...) asparagine glycan. The region spanning 863-905 (DIDECSQDPGLCLPHGACENLQGSYVCVCDEGFTLTQDQHGCE) is the EGF-like 9; calcium-binding domain. The region spanning 914–968 (KECYLNFDDTVFCDSVLATNVTQQECCCSLGAGWGDHCEIYPCPVYSSAEFHSLC) is the TB 3 domain. An N-linked (GlcNAc...) asparagine glycan is attached at Asn933. The EGF-like 10; calcium-binding domain maps to 990–1032 (DIDECILFGAEICKEGKCVNTQPGYECYCKQGFYYDGNLLECV). The region spanning 1033 to 1072 (DVDECLDESNCRNGVCENTRGGYRCACTPPAEYSPAQRQC) is the EGF-like 11; calcium-binding domain. One can recognise a TB 4 domain in the interval 1086 to 1136 (EVCWGQRGEDGMCMGPLAGPALTFDDCCCRQGRGWGTQCRPCPPRGTGSQC). Residues 1138 to 1148 (TSQSESNSFWD) show a composition bias toward polar residues. Residues 1138–1169 (TSQSESNSFWDTSPLLLGKSPRDEDSSEEDSD) are disordered. The 28-residue stretch at 1204-1231 (DIDECRELNQRGLLCKSERCVNTSGSFR) folds into the EGF-like 12; calcium-binding domain. 2 cysteine pairs are disulfide-bonded: Cys1208–Cys1223 and Cys1218–Cys1232. N-linked (GlcNAc...) asparagine glycosylation is present at Asn1225.

The protein belongs to the LTBP family. Forms part of the large latent transforming growth factor beta (TGFB1) precursor complex; removal is essential for activation of complex. Interacts with EFEMP2. Contains hydroxylated asparagine residues. Post-translationally, two intrachain disulfide bonds from the TB3 domain are rearranged upon TGFB1 binding, and form interchain bonds with TGFB1 propeptide, anchoring it to the extracellular matrix.

It is found in the secreted. It localises to the extracellular space. The protein localises to the extracellular matrix. Key regulator of transforming growth factor beta (TGFB1, TGFB2 and TGFB3) that controls TGF-beta activation by maintaining it in a latent state during storage in extracellular space. Associates specifically via disulfide bonds with the Latency-associated peptide (LAP), which is the regulatory chain of TGF-beta, and regulates integrin-dependent activation of TGF-beta. This chain is Latent-transforming growth factor beta-binding protein 3 (Ltbp3), found in Mus musculus (Mouse).